A 250-amino-acid chain; its full sequence is UDP-2,3-diacylglucosamine hydrolase (250 aa).

Mn(2+)-binding residues include Asp-8, His-10, Asp-41, Asn-79, and His-115. Substrate is bound at residue Asn-79–His-80. Substrate-binding residues include Asp-123, Thr-165, Lys-168, and His-196. Mn(2+)-binding residues include His-196 and His-198.

The protein belongs to the LpxH family. It depends on Mn(2+) as a cofactor.

The protein localises to the cell inner membrane. It carries out the reaction UDP-2-N,3-O-bis[(3R)-3-hydroxytetradecanoyl]-alpha-D-glucosamine + H2O = 2-N,3-O-bis[(3R)-3-hydroxytetradecanoyl]-alpha-D-glucosaminyl 1-phosphate + UMP + 2 H(+). Its pathway is glycolipid biosynthesis; lipid IV(A) biosynthesis; lipid IV(A) from (3R)-3-hydroxytetradecanoyl-[acyl-carrier-protein] and UDP-N-acetyl-alpha-D-glucosamine: step 4/6. In terms of biological role, hydrolyzes the pyrophosphate bond of UDP-2,3-diacylglucosamine to yield 2,3-diacylglucosamine 1-phosphate (lipid X) and UMP by catalyzing the attack of water at the alpha-P atom. Involved in the biosynthesis of lipid A, a phosphorylated glycolipid that anchors the lipopolysaccharide to the outer membrane of the cell. This Blochmanniella pennsylvanica (strain BPEN) protein is UDP-2,3-diacylglucosamine hydrolase.